The following is a 407-amino-acid chain: Peptidase T (407 aa).

Residue His82 coordinates Zn(2+). The active site involves Asp84. Asp143 contributes to the Zn(2+) binding site. Catalysis depends on Glu177, which acts as the Proton acceptor. The Zn(2+) site is built by Glu178, Asp200, and His382.

It belongs to the peptidase M20B family. Zn(2+) serves as cofactor.

The protein localises to the cytoplasm. It carries out the reaction Release of the N-terminal residue from a tripeptide.. Its function is as follows. Cleaves the N-terminal amino acid of tripeptides. This Streptococcus pyogenes serotype M2 (strain MGAS10270) protein is Peptidase T.